The sequence spans 502 residues: Maturase K (502 aa).

This sequence belongs to the intron maturase 2 family. MatK subfamily.

Its subcellular location is the plastid. The protein localises to the chloroplast. Its function is as follows. Usually encoded in the trnK tRNA gene intron. Probably assists in splicing its own and other chloroplast group II introns. The protein is Maturase K of Sisymbrium irio (London rocket).